A 205-amino-acid chain; its full sequence is Putative 3-methyladenine DNA glycosylase (205 aa).

The protein belongs to the DNA glycosylase MPG family.

In Bacillus cereus (strain ZK / E33L), this protein is Putative 3-methyladenine DNA glycosylase.